We begin with the raw amino-acid sequence, 214 residues long: Thymidylate kinase (214 aa).

ATP is bound at residue 10–17 (GGEGAGKS).

Belongs to the thymidylate kinase family.

The catalysed reaction is dTMP + ATP = dTDP + ADP. Its function is as follows. Phosphorylation of dTMP to form dTDP in both de novo and salvage pathways of dTTP synthesis. This Brucella suis (strain ATCC 23445 / NCTC 10510) protein is Thymidylate kinase.